The following is a 346-amino-acid chain: NADH-ubiquinone oxidoreductase chain 2 (346 aa).

11 helical membrane passes run 1-21, 25-45, 60-80, 95-115, 124-144, 149-169, 178-195, 200-219, 242-262, 274-294, and 326-346; these read MNPH…TITI, HWVL…PLIS, FLTQ…NAWA, CLLL…HFWF, LMTA…LLLM, LNPA…GWMG, ILAF…IILV, LALL…FMAL, ATLM…GFMP, EMTP…FFYL, and AILA…HAIV.

The protein belongs to the complex I subunit 2 family.

The protein localises to the mitochondrion inner membrane. It carries out the reaction a ubiquinone + NADH + 5 H(+)(in) = a ubiquinol + NAD(+) + 4 H(+)(out). Functionally, core subunit of the mitochondrial membrane respiratory chain NADH dehydrogenase (Complex I) that is believed to belong to the minimal assembly required for catalysis. Complex I functions in the transfer of electrons from NADH to the respiratory chain. The immediate electron acceptor for the enzyme is believed to be ubiquinone. The protein is NADH-ubiquinone oxidoreductase chain 2 (MT-ND2) of Mareca americana (American wigeon).